A 590-amino-acid polypeptide reads, in one-letter code: Major surface protein MspTL (590 aa).

The N-terminal stretch at 1–19 (MKKILAFFLVFALAGAVFA) is a signal peptide.

Its subcellular location is the cell outer membrane. In terms of biological role, major component of the outer membrane. In Treponema lecithinolyticum, this protein is Major surface protein MspTL (mspTL).